A 144-amino-acid chain; its full sequence is Superoxide dismutase [Mn], mitochondrial (144 aa).

Mn(2+) contacts are provided by H10, H58, and D143.

This sequence belongs to the iron/manganese superoxide dismutase family. Homotetramer. Mn(2+) is required as a cofactor.

The protein localises to the mitochondrion matrix. It carries out the reaction 2 superoxide + 2 H(+) = H2O2 + O2. Functionally, destroys superoxide anion radicals which are normally produced within the cells and which are toxic to biological systems. In Palinurus vulgaris (European spiny lobster), this protein is Superoxide dismutase [Mn], mitochondrial.